The chain runs to 399 residues: Probable WRKY transcription factor 48 (399 aa).

Composition is skewed to basic and acidic residues over residues 1–11 (MEKKKEEDHHH) and 19–38 (KEIK…EQKQ). Disordered stretches follow at residues 1-57 (MEKK…TSSD) and 138-202 (AESS…KNQK). Residues 143–161 (VVNTTPTSPNSTSVSSSSN) show a composition bias toward low complexity. Over residues 162–171 (EAANDNNSGK) the composition is skewed to polar residues. The segment covering 184–193 (QQEQKGTKPQ) has biased composition (low complexity). The segment at residues 215–280 (SDIDNLDDGY…YEGQHTHPFP (66 aa)) is a DNA-binding region (WRKY). The tract at residues 361–399 (QASTSTSSSIRDHGLLQDILPSQIRSDTINTQTNEENKK) is disordered. Residues 383–399 (QIRSDTINTQTNEENKK) are compositionally biased toward polar residues.

Its subcellular location is the nucleus. Its function is as follows. Transcription factor. Interacts specifically with the W box (5'-(T)TGAC[CT]-3'), a frequently occurring elicitor-responsive cis-acting element. The sequence is that of Probable WRKY transcription factor 48 (WRKY48) from Arabidopsis thaliana (Mouse-ear cress).